The primary structure comprises 433 residues: Serine--tRNA ligase (433 aa).

Position 235–237 (235–237 (TSE)) interacts with L-serine. 266–268 (RSE) provides a ligand contact to ATP. Glutamate 289 contacts L-serine. Residue 353-356 (EISS) coordinates ATP. Serine 388 contacts L-serine.

Belongs to the class-II aminoacyl-tRNA synthetase family. Type-1 seryl-tRNA synthetase subfamily. Homodimer. The tRNA molecule binds across the dimer.

It localises to the cytoplasm. It carries out the reaction tRNA(Ser) + L-serine + ATP = L-seryl-tRNA(Ser) + AMP + diphosphate + H(+). The enzyme catalyses tRNA(Sec) + L-serine + ATP = L-seryl-tRNA(Sec) + AMP + diphosphate + H(+). Its pathway is aminoacyl-tRNA biosynthesis; selenocysteinyl-tRNA(Sec) biosynthesis; L-seryl-tRNA(Sec) from L-serine and tRNA(Sec): step 1/1. In terms of biological role, catalyzes the attachment of serine to tRNA(Ser). Is also able to aminoacylate tRNA(Sec) with serine, to form the misacylated tRNA L-seryl-tRNA(Sec), which will be further converted into selenocysteinyl-tRNA(Sec). The protein is Serine--tRNA ligase of Burkholderia cenocepacia (strain ATCC BAA-245 / DSM 16553 / LMG 16656 / NCTC 13227 / J2315 / CF5610) (Burkholderia cepacia (strain J2315)).